The sequence spans 184 residues: Ribosome-recycling factor (184 aa).

This sequence belongs to the RRF family.

The protein resides in the cytoplasm. Its function is as follows. Responsible for the release of ribosomes from messenger RNA at the termination of protein biosynthesis. May increase the efficiency of translation by recycling ribosomes from one round of translation to another. This Acholeplasma laidlawii (strain PG-8A) protein is Ribosome-recycling factor.